The sequence spans 163 residues: Meiotically up-regulated gene 109 protein (163 aa).

A run of 4 helical transmembrane segments spans residues 61-78 (YRFYGTLLCICWLYFFIW), 82-104 (ALLALMVGVFLSFVMHGLGSLTI), 114-134 (YSIPGVCAVTLIVIMFLAPVG), and 136-156 (LFWSFCIVSSFAGLHCLLTTY).

The protein localises to the membrane. In terms of biological role, has a role in meiosis. This chain is Meiotically up-regulated gene 109 protein (mug109), found in Schizosaccharomyces pombe (strain 972 / ATCC 24843) (Fission yeast).